A 304-amino-acid chain; its full sequence is uncharacterized protein (304 aa).

The span at 226–244 (SRNSESSRQSNLNSPNDSV) shows a compositional bias: polar residues. Positions 226-263 (SRNSESSRQSNLNSPNDSVKFNEFNKSNKSTKTNPNNI) are disordered. A compositionally biased stretch (low complexity) spans 246–262 (FNEFNKSNKSTKTNPNN).

This is an uncharacterized protein from Acanthamoeba polyphaga (Amoeba).